A 269-amino-acid chain; its full sequence is 5'-nucleotidase SurE (269 aa).

A divalent metal cation contacts are provided by aspartate 11, aspartate 12, serine 43, and asparagine 101.

The protein belongs to the SurE nucleotidase family. Requires a divalent metal cation as cofactor.

Its subcellular location is the cytoplasm. It carries out the reaction a ribonucleoside 5'-phosphate + H2O = a ribonucleoside + phosphate. Functionally, nucleotidase that shows phosphatase activity on nucleoside 5'-monophosphates. This Prochlorococcus marinus (strain MIT 9301) protein is 5'-nucleotidase SurE.